A 245-amino-acid polypeptide reads, in one-letter code: Putative MSV199 domain-containing protein 146R (245 aa).

Residues 2-97 (RKGYIYVIEN…NTLHGKLKNL (96 aa)) form the GIY-YIG domain.

The protein is Putative MSV199 domain-containing protein 146R of Acheta domesticus (House cricket).